Consider the following 225-residue polypeptide: Urease accessory protein UreE (225 aa).

Basic and acidic residues-rich tracts occupy residues 189–202 (HSHDFMGHSHEHEG) and 212–225 (NSHDNEHDEHHSRR). Residues 189 to 225 (HSHDFMGHSHEHEGHRHVHNHAGNSHDNEHDEHHSRR) form a disordered region.

This sequence belongs to the UreE family.

The protein resides in the cytoplasm. In terms of biological role, involved in urease metallocenter assembly. Binds nickel. Probably functions as a nickel donor during metallocenter assembly. The chain is Urease accessory protein UreE from Edwardsiella ictaluri.